A 1274-amino-acid polypeptide reads, in one-letter code: MLLILVLGVSLAAASRPECFNPRFTLTPLNHTLNYTSIKAKVSNVLLPDPYIAYSGQTLRQNLFMADMSNTILYPVTPPANGANGGFIYNTSIIPVSAGLFVNTWMYRQPASSRAYCQEPFGVAFGDTFENDRIAILIMAPDNLGSWSAVAPRNQTNIYLLVCSNATLCINPGFNRWGPAGSFIAPDALVDHSNSCFVNNTFSVNISTSRISLAFLFKDGDLLIYHSGWLPTSNFEHGFSRGSHPMTYFMSLPVGGNLPRAQFFQSIVRSNAIDKGDGMCTNFDVNLHVAHLINRDLLVSYFNNGSVANAADCADSAAEELYCVTGSFDPPTGVYPLSRYRAQVAGFVRVTQRGSYCTPPYSVLQDPPQPVVWRRYMLYDCVFDFTVVVDSLPTHQLQCYGVSPRRLASMCYGSVTLDVMRINETHLNNLFNRVPDTFSLYNYALPDNFYGCLHAFYLNSTAPYAVANRFPIKPGGRQSNSAFIDTVINAAHYSPFSYVYGLAVITLKPAAGSKLVCPVANDTVVITDRCVQYNLYGYTGTGVLSKNTSLVIPDGKVFTASSTGTIIGVSINSTTYSIMPCVTVPVSVGYHPNFERALLFNGLSCSQRSRAVTEPVSVLWSASATAQDAFDTPSGCVVNVELRNTTIVNTCAMPIGNSLCFINGSIATANADSLPRLQLVNYDPLYDNSTATPMTPVYWVKVPTNFTLSATEEYIQTTAPKITIDCARYLCGDSSRCLNVLLHYGTFCNDINKALSRVSTILDSALLSLVKELSINTRDEVTTFSFDGDYNFTGLMGCLGPNCGATTYRSAFSDLLYDKVRITDPGFMQSYQKCIDSQWGGSIRDLLCTQTYNGIAVLPPIVSPAMQALYTSLLVGAVASSGYTFGITSAGVIPFATQLQFRLNGIGVTTQVLVENQKLIASSFNNALVNIQKGFTETSIALSKMQDVINQHAAQLHTLVVQLGNSFGAISSSINEIFSRLEGLAANAEVDRLINGRMMVLNTYVTQLLIQASEAKAQNALAAQKISECVKAQSLRNDFCGNGTHVLSIPQLAPNGVLFIHYAYTPTEYAFVQTSAGLCHNGTGYAPRQGMFVLPNNTNMWHFTTMQFYNPVNISASNTQVLTSCSVNYTSVNYTVLEPSVPGDYDFQKEFDKFYKNLSTIFNNTFNPNDFNFSTVDVTAQIKSLHDVVNQLNQSFIDLKKLNVYEKTIKWPWYVWLAMIAGIVGLVLAVIMLMCMTNCCSCFKGMCDCRRCCGSYDSYDDVYPAVRVNKKRTV.

Positions 1–11 (MLLILVLGVSL) are cleaved as a signal peptide. The Extracellular segment spans residues 12 to 1212 (AAASRPECFN…NVYEKTIKWP (1201 aa)). Positions 15-325 (SRPECFNPRF…SAAEELYCVT (311 aa)) constitute a BetaCoV S1-NTD domain. Disulfide bonds link Cys-19–Cys-169 and Cys-163–Cys-196. N-linked (GlcNAc...) asparagine; by host glycosylation is found at Asn-30, Asn-34, Asn-90, Asn-154, Asn-165, Asn-199, Asn-205, and Asn-304. Cystine bridges form between Cys-313–Cys-323, Cys-357–Cys-381, Cys-399–Cys-452, and Cys-411–Cys-517. In terms of domain architecture, BetaCoV S1-CTD spans 355-519 (SYCTPPYSVL…AAGSKLVCPV (165 aa)). Asn-423, Asn-459, Asn-521, Asn-547, Asn-572, Asn-644, Asn-663, Asn-688, Asn-705, and Asn-791 each carry an N-linked (GlcNAc...) asparagine; by host glycan. Fusion peptide stretches follow at residues 810-831 (SAFS…MQSY) and 829-852 (QSYQ…TQTY). Cys-834 and Cys-848 form a disulfide bridge. Positions 917–967 (QKLIASSFNNALVNIQKGFTETSIALSKMQDVINQHAAQLHTLVVQLGNSF) are heptad repeat 1. A coiled-coil region spans residues 946–990 (QDVINQHAAQLHTLVVQLGNSFGAISSSINEIFSRLEGLAANAEV). Asn-1042, Asn-1081, Asn-1096, Asn-1113, Asn-1128, Asn-1133, Asn-1157, Asn-1163, Asn-1172, and Asn-1193 each carry an N-linked (GlcNAc...) asparagine; by host glycan. The heptad repeat 2 stretch occupies residues 1162-1201 (FNNTFNPNDFNFSTVDVTAQIKSLHDVVNQLNQSFIDLKK). Residues 1174 to 1202 (STVDVTAQIKSLHDVVNQLNQSFIDLKKL) adopt a coiled-coil conformation. Residues 1213-1233 (WYVWLAMIAGIVGLVLAVIML) traverse the membrane as a helical segment. Topologically, residues 1234-1274 (MCMTNCCSCFKGMCDCRRCCGSYDSYDDVYPAVRVNKKRTV) are cytoplasmic. A KxHxx motif is present at residues 1273-1274 (TV).

This sequence belongs to the betacoronaviruses spike protein family. Homotrimer; each monomer consists of a S1 and a S2 subunit. The resulting peplomers protrude from the virus surface as spikes. Specific enzymatic cleavages in vivo yield mature proteins. The precursor is processed into S1 and S2 by host cell furin or another cellular protease to yield the mature S1 and S2 proteins. Additionally, a second cleavage leads to the release of a fusion peptide after viral attachment to host cell receptor. Post-translationally, the cytoplasmic Cys-rich domain is palmitoylated. Spike glycoprotein is digested within host endosomes.

Its subcellular location is the virion membrane. The protein resides in the host endoplasmic reticulum-Golgi intermediate compartment membrane. It is found in the host cell membrane. Its function is as follows. Attaches the virion to the cell membrane by interacting with host receptor, initiating the infection. In terms of biological role, mediates fusion of the virion and cellular membranes by acting as a class I viral fusion protein. Under the current model, the protein has at least three conformational states: pre-fusion native state, pre-hairpin intermediate state, and post-fusion hairpin state. During viral and target cell membrane fusion, the coiled coil regions (heptad repeats) assume a trimer-of-hairpins structure, positioning the fusion peptide in close proximity to the C-terminal region of the ectodomain. The formation of this structure appears to drive apposition and subsequent fusion of viral and target cell membranes. Acts as a viral fusion peptide which is unmasked following S2 cleavage occurring upon virus endocytosis. The sequence is that of Spike glycoprotein from Rousettus leschenaultii (Leschenault's rousette).